The following is a 366-amino-acid chain: tRNA(Met) cytidine acetate ligase (366 aa).

Residues Ile-7 to Leu-20, Gly-101, Asn-145, and Arg-170 contribute to the ATP site.

It belongs to the TmcAL family.

The protein resides in the cytoplasm. The catalysed reaction is cytidine(34) in elongator tRNA(Met) + acetate + ATP = N(4)-acetylcytidine(34) in elongator tRNA(Met) + AMP + diphosphate. Its function is as follows. Catalyzes the formation of N(4)-acetylcytidine (ac(4)C) at the wobble position of elongator tRNA(Met), using acetate and ATP as substrates. First activates an acetate ion to form acetyladenylate (Ac-AMP) and then transfers the acetyl group to tRNA to form ac(4)C34. The polypeptide is tRNA(Met) cytidine acetate ligase (Pediococcus pentosaceus (strain ATCC 25745 / CCUG 21536 / LMG 10740 / 183-1w)).